The primary structure comprises 430 residues: Dye-decolorizing peroxidase Tfu_3078 (430 aa).

Residues 1-39 (MTEPDTERKGSSRRGFLAGLGAAALTGAGIGMAAGEVLR) constitute a signal peptide (tat-type signal). Residues 42 to 75 (LPDSDPAASPEAEQRLRMAAQRADATAAPQPGIS) form a disordered region. Residues 60 to 69 (AAQRADATAA) show a composition bias toward low complexity. The active-site Proton acceptor is Asp242. His338 lines the heme pocket.

The protein belongs to the DyP-type peroxidase family. In terms of assembly, monomer. It depends on heme b as a cofactor. In terms of processing, exported by the Tat system. The position of the signal peptide cleavage has not been experimentally proven.

It localises to the secreted. It carries out the reaction Reactive Blue 5 + 2 H2O2 = 2,2'-disulfonyl azobenzene + 3-[(4-amino-6-chloro-1,3,5-triazin-2-yl)amino]benzenesulfonate + phthalate + 2 H2O + 2 H(+). Its function is as follows. Peroxidase that is able to convert a large number of compounds, but its physiological substrate is not known. Shows high reactivity towards anthraquinone dyes (e.g. Reactive Blue 19) and a modest activity towards standard peroxidase substrates (such as guaiacol and 2,6-dimethoxyphenol) and azo dyes (e.g. Reactive Blue 5). Is also able to oxidize aromatic sulfides enantioselectively, resulting in the corresponding (R)-sulfoxides, but with a poor efficiency. Does not display catalase activity. This chain is Dye-decolorizing peroxidase Tfu_3078, found in Thermobifida fusca (strain YX).